Here is a 1409-residue protein sequence, read N- to C-terminus: DNA-directed RNA polymerase subunit beta' (1409 aa).

The Zn(2+) site is built by Cys70, Cys72, Cys85, and Cys88. Residues Asp460, Asp462, and Asp464 each coordinate Mg(2+). 4 residues coordinate Zn(2+): Cys822, Cys896, Cys903, and Cys906.

Belongs to the RNA polymerase beta' chain family. The RNAP catalytic core consists of 2 alpha, 1 beta, 1 beta' and 1 omega subunit. When a sigma factor is associated with the core the holoenzyme is formed, which can initiate transcription. Mg(2+) serves as cofactor. Zn(2+) is required as a cofactor.

The enzyme catalyses RNA(n) + a ribonucleoside 5'-triphosphate = RNA(n+1) + diphosphate. Functionally, DNA-dependent RNA polymerase catalyzes the transcription of DNA into RNA using the four ribonucleoside triphosphates as substrates. The sequence is that of DNA-directed RNA polymerase subunit beta' from Methylobacillus flagellatus (strain ATCC 51484 / DSM 6875 / VKM B-1610 / KT).